We begin with the raw amino-acid sequence, 67 residues long: DNA-directed RNA polymerase subunit omega (67 aa).

It belongs to the RNA polymerase subunit omega family. The RNAP catalytic core consists of 2 alpha, 1 beta, 1 beta' and 1 omega subunit. When a sigma factor is associated with the core the holoenzyme is formed, which can initiate transcription.

The catalysed reaction is RNA(n) + a ribonucleoside 5'-triphosphate = RNA(n+1) + diphosphate. In terms of biological role, promotes RNA polymerase assembly. Latches the N- and C-terminal regions of the beta' subunit thereby facilitating its interaction with the beta and alpha subunits. The protein is DNA-directed RNA polymerase subunit omega of Listeria monocytogenes serotype 4a (strain HCC23).